The sequence spans 194 residues: GTP cyclohydrolase-2 (194 aa).

47–51 (RVHSE) contacts GTP. The Zn(2+) site is built by cysteine 52, cysteine 63, and cysteine 65. Residues glutamine 68, 90–92 (EGR), and threonine 112 each bind GTP. Aspartate 124 acts as the Proton acceptor in catalysis. The active-site Nucleophile is arginine 126. GTP-binding residues include threonine 147 and lysine 152.

It belongs to the GTP cyclohydrolase II family. Homodimer. Zn(2+) serves as cofactor.

It carries out the reaction GTP + 4 H2O = 2,5-diamino-6-hydroxy-4-(5-phosphoribosylamino)-pyrimidine + formate + 2 phosphate + 3 H(+). The protein operates within cofactor biosynthesis; riboflavin biosynthesis; 5-amino-6-(D-ribitylamino)uracil from GTP: step 1/4. Its function is as follows. Catalyzes the conversion of GTP to 2,5-diamino-6-ribosylamino-4(3H)-pyrimidinone 5'-phosphate (DARP), formate and pyrophosphate. The protein is GTP cyclohydrolase-2 of Buchnera aphidicola subsp. Acyrthosiphon pisum (strain APS) (Acyrthosiphon pisum symbiotic bacterium).